Reading from the N-terminus, the 495-residue chain is Putative aldehyde dehydrogenase AldA (495 aa).

212 to 218 (GKGSESG) contacts NAD(+). Catalysis depends on residues Glu-256 and Cys-290.

This sequence belongs to the aldehyde dehydrogenase family.

The enzyme catalyses an aldehyde + NAD(+) + H2O = a carboxylate + NADH + 2 H(+). This chain is Putative aldehyde dehydrogenase AldA (aldA), found in Staphylococcus aureus (strain USA300).